Reading from the N-terminus, the 366-residue chain is Tripartite motif-containing protein 54 (366 aa).

The RING-type zinc finger occupies 26 to 82 (CPICLEMFSKPVVILPCQHNLCRKCANDVFQASNPLWQSRSSTTVSSGGRFRCPSCR). The B box-type zinc finger occupies 121–163 (EQHLMCEEHEDEKINIYCLSCEVPTCSLCKVFGAHKDCEVAPL). Residues cysteine 126, histidine 129, cysteine 149, and histidine 155 each contribute to the Zn(2+) site. The tract at residues 168–211 (KRQKSELSDGIAMLVAGNDRVQAVITQMEEVCQTIEENSRRQKQ) is mediates microtubule-binding and homooligomerization. Positions 185–258 (NDRVQAVITQ…LIRQYGDHLE (74 aa)) form a coiled coil. Residues 271–329 (MEEPQMALYLQQAKELINKVGTMSKVELAGRPEPGYERMDQFTVSVEHVAEMLRTIDFQ) form the COS domain. The interval 326–366 (IDFQPGTSGEEEDEEVAVEGEEGNAGPEEERTDGRESTGQH) is disordered. The span at 334–347 (GEEEDEEVAVEGEE) shows a compositional bias: acidic residues. Residues 353-366 (EEERTDGRESTGQH) show a composition bias toward basic and acidic residues.

As to quaternary structure, homooligomer and heterooligomer. Interacts with TRIM63 and probably with TRIM55. Interacts with tubulin.

Its subcellular location is the cytoplasm. The protein resides in the cytoskeleton. It is found in the myofibril. It localises to the sarcomere. The protein localises to the z line. Functionally, may bind and stabilize microtubules during myotubes formation. The protein is Tripartite motif-containing protein 54 (TRIM54) of Bos taurus (Bovine).